The primary structure comprises 139 residues: Arsenate reductase (139 aa).

Active-site nucleophile residues include Cys-10, Cys-82, and Cys-89. 2 disulfides stabilise this stretch: Cys-10–Cys-82 and Cys-82–Cys-89.

Belongs to the low molecular weight phosphotyrosine protein phosphatase family. Thioredoxin-coupled ArsC subfamily.

It is found in the cytoplasm. The enzyme catalyses arsenate + [thioredoxin]-dithiol + H(+) = arsenite + [thioredoxin]-disulfide + H2O. Catalyzes the reduction of arsenate [As(V)] to arsenite [As(III)]. This is Arsenate reductase from Shouchella clausii (strain KSM-K16) (Alkalihalobacillus clausii).